Consider the following 42-residue polypeptide: Hemoglobin subunit beta-A (42 aa).

In terms of domain architecture, Globin spans 2–42; it reads EWTDAERSAILSLWGKIDTDELGPALLARLXLVXXXTQRYF.

It belongs to the globin family. As to quaternary structure, heterotetramer of two alpha chains and two beta chains. Red blood cells.

Involved in oxygen transport from gills to the various peripheral tissues. The sequence is that of Hemoglobin subunit beta-A from Catostomus clarkii (Desert sucker).